Here is a 517-residue protein sequence, read N- to C-terminus: Cytochrome P450 monooxygenase TRI4 (517 aa).

Residues 15-37 (AVGAAVAVGALYFFCQCFYNLYL) traverse the membrane as a helical segment. Asparagine 444 carries N-linked (GlcNAc...) asparagine glycosylation. Heme is bound at residue cysteine 452.

Belongs to the cytochrome P450 family. It depends on heme as a cofactor.

The protein resides in the membrane. It functions in the pathway sesquiterpene biosynthesis; trichothecene biosynthesis. Functionally, cytochrome P450 monooxygenase; part of the gene cluster that mediates the production of the antimicrobial trichothecene harzianum A (HA) that plays a role in Botrytis cinerea antagonistic activity and plant defense priming. The biosynthesis of harzianum A begins with the cyclization of farnesyl diphosphate to trichodiene and is catalyzed by the trichodiene synthase TRI5. Trichodiene undergoes a series of oxygenations catalyzed by the cytochrome P450 monooxygenase TRI4. TRI4 controls the addition of 3 oxygens at C-2, C-11, and the C-12, C-13-epoxide to form the intermediate isotrichodiol. Isotrichodiol then undergoes a non-enzymatic isomerization and cyclization to form 12,13-epoxytrichothec-9-ene (EPT) which is further converted to trichodermol by the cytochrome P450 monooxygenase TRI11 via C-4 hydroxylation. The last step of HA synthesis is esterification of an octatriendioyl moiety to the C-4 oxygen of trichodermol. The octatriendioyl moiety is probably produced by the polyketide synthase TRI17 and the esterification performed by the trichothecene O-acetyltransferase TRI3. In Trichoderma arundinaceum, this protein is Cytochrome P450 monooxygenase TRI4.